A 274-amino-acid chain; its full sequence is 2-succinyl-6-hydroxy-2,4-cyclohexadiene-1-carboxylate synthase (274 aa).

The protein belongs to the AB hydrolase superfamily. MenH family. Monomer.

It catalyses the reaction 5-enolpyruvoyl-6-hydroxy-2-succinyl-cyclohex-3-ene-1-carboxylate = (1R,6R)-6-hydroxy-2-succinyl-cyclohexa-2,4-diene-1-carboxylate + pyruvate. It functions in the pathway quinol/quinone metabolism; 1,4-dihydroxy-2-naphthoate biosynthesis; 1,4-dihydroxy-2-naphthoate from chorismate: step 3/7. It participates in quinol/quinone metabolism; menaquinone biosynthesis. Functionally, catalyzes a proton abstraction reaction that results in 2,5-elimination of pyruvate from 2-succinyl-5-enolpyruvyl-6-hydroxy-3-cyclohexene-1-carboxylate (SEPHCHC) and the formation of 2-succinyl-6-hydroxy-2,4-cyclohexadiene-1-carboxylate (SHCHC). This Yersinia enterocolitica serotype O:8 / biotype 1B (strain NCTC 13174 / 8081) protein is 2-succinyl-6-hydroxy-2,4-cyclohexadiene-1-carboxylate synthase.